Reading from the N-terminus, the 181-residue chain is Protein Syd (181 aa).

The protein belongs to the Syd family.

It is found in the cell inner membrane. In terms of biological role, interacts with the SecY protein in vivo. May bind preferentially to an uncomplexed state of SecY, thus functioning either as a chelating agent for excess SecY in the cell or as a regulatory factor that negatively controls the translocase function. The protein is Protein Syd of Citrobacter koseri (strain ATCC BAA-895 / CDC 4225-83 / SGSC4696).